The primary structure comprises 330 residues: Phosphate acyltransferase (330 aa).

This sequence belongs to the PlsX family. Homodimer. Probably interacts with PlsY.

The protein localises to the cytoplasm. It catalyses the reaction a fatty acyl-[ACP] + phosphate = an acyl phosphate + holo-[ACP]. Its pathway is lipid metabolism; phospholipid metabolism. Functionally, catalyzes the reversible formation of acyl-phosphate (acyl-PO(4)) from acyl-[acyl-carrier-protein] (acyl-ACP). This enzyme utilizes acyl-ACP as fatty acyl donor, but not acyl-CoA. The protein is Phosphate acyltransferase of Bacillus licheniformis (strain ATCC 14580 / DSM 13 / JCM 2505 / CCUG 7422 / NBRC 12200 / NCIMB 9375 / NCTC 10341 / NRRL NRS-1264 / Gibson 46).